The following is a 344-amino-acid chain: Methionine synthase (344 aa).

Residues histidine 211, cysteine 213, glutamate 236, and cysteine 315 each coordinate Zn(2+).

This sequence belongs to the archaeal MetE family. Zn(2+) serves as cofactor.

The protein operates within amino-acid biosynthesis; L-methionine biosynthesis via de novo pathway. In terms of biological role, catalyzes the transfer of a methyl group to L-homocysteine resulting in methionine formation. The physiological methyl donor is unknown. The chain is Methionine synthase from Thermoplasma volcanium (strain ATCC 51530 / DSM 4299 / JCM 9571 / NBRC 15438 / GSS1).